Reading from the N-terminus, the 947-residue chain is Regulator of spindle assembly protein 2 (947 aa).

Disordered stretches follow at residues 20–148 (EKPA…LSEQ) and 173–211 (SPHE…LKPR). Composition is skewed to basic and acidic residues over residues 30–50 (PKYR…EGEK) and 62–84 (TRED…DLRI). Composition is skewed to polar residues over residues 90–102 (SATP…SDQY) and 179–188 (QQTIQESSEQ). The stretch at 276–320 (IIAEEAKKRRNEAEAVRKLIEVETQNAKKRAVIQELKDRIDKLTQ) forms a coiled coil. 4 disordered regions span residues 407–453 (KINP…RRIG), 575–594 (ERES…LEIP), 600–662 (SVTT…GLII), and 681–705 (EQSL…FLLD). Positions 411-422 (SSQLNQQSSSDA) are enriched in low complexity. Positions 430 to 449 (EASTQMTSRLAESAMTQTSP) are enriched in polar residues. The stretch at 563-591 (AGLSHYLEQVKKERESMEAQESESESMEL) forms a coiled coil. Over residues 580 to 590 (EAQESESESME) the composition is skewed to acidic residues. The segment covering 645–657 (FEHEIEEHKEPEK) has biased composition (basic and acidic residues).

As to quaternary structure, interacts with phosphatase regulatory subunit rsa-1 and tpxl-1. May interact with spd-5. May interact with sys-1.

The protein resides in the cytoplasm. It is found in the cytoskeleton. It localises to the microtubule organizing center. Its subcellular location is the centrosome. Recruits rsa-1 and, thereby, phosphatase let-92/paa-1 complex to the centrosomes. Recruits sys-1/beta-catenin to mitotic centrosomes during the first embryonic cell divisions. This Caenorhabditis elegans protein is Regulator of spindle assembly protein 2.